The sequence spans 153 residues: Calmodulin-like protein 4 (153 aa).

4 consecutive EF-hand domains span residues 8–43 (DQIN…LGAS), 44–79 (PTPG…QIKQ), 81–116 (DPKK…LGEK), and 117–152 (LTHK…PVRD).

The protein belongs to the calmodulin family. In terms of assembly, interacts with MYO7B; the interaction mediates the association of CALML4 with the IMAC/intermicrovillar adhesion complex. Interacts with MYO7A. As to expression, expressed in the small intestine, in both mature enterocytes on the villus surface and immature cells that reside in the crypt stem-cell niche.

The protein localises to the cell projection. It localises to the microvillus. As part of the intermicrovillar adhesion complex/IMAC plays a role in epithelial brush border differentiation, controlling microvilli organization and length. Acts as a light chain for MYO7B and is required for efficient targeting of the IMAC to the tips of border brush microvilli. This chain is Calmodulin-like protein 4 (Calml4), found in Mus musculus (Mouse).